Here is a 121-residue protein sequence, read N- to C-terminus: UPF0295 protein OB0906 (121 aa).

Transmembrane regions (helical) follow at residues 14–34 and 43–63; these read IRTFALILVFAGIITMYGGIL and VIFFILGTLMVILSCAVYVWI.

The protein belongs to the UPF0295 family.

Its subcellular location is the cell membrane. This chain is UPF0295 protein OB0906, found in Oceanobacillus iheyensis (strain DSM 14371 / CIP 107618 / JCM 11309 / KCTC 3954 / HTE831).